The primary structure comprises 487 residues: Melanopsin (487 aa).

The interval 1 to 37 (MNPPSGPRTQEPSCVATPASPSRWDGYRSSTSSLDQP) is disordered. Residues 1–67 (MNPPSGPRTQ…VDVPDHAHYT (67 aa)) lie on the Extracellular side of the membrane. Residues 68–88 (LGTVILLVGLTGILGNLMVIY) traverse the membrane as a helical segment. The Cytoplasmic portion of the chain corresponds to 89–102 (TFCRSRGLRTPANM). A helical transmembrane segment spans residues 103–123 (FIINLAVSDFFMSFTQAPVFF). At 124-139 (ASSLHKRWLFGEAGCE) the chain is on the extracellular side. Residues C138 and C216 are joined by a disulfide bond. A helical membrane pass occupies residues 140 to 160 (FYAFCGALFGITSMITLMAIA). At 161-183 (LDRYLVITHPLATIGVVSKRRAA) the chain is on the cytoplasmic side. The chain crosses the membrane as a helical span at residues 184 to 204 (LVLLGVWLYALAWSLPPFFGW). The Extracellular portion of the chain corresponds to 205–233 (SAYVPEGLLTSCSWDYMSFTPSVRAYTML). The chain crosses the membrane as a helical span at residues 234 to 254 (LFCFVFFLPLLVIVYCYIFIF). Residues 255–291 (RAIRETGQALQTFRACEGGGRSPRQRQRLQREWKMAK) are Cytoplasmic-facing. A helical transmembrane segment spans residues 292-312 (IELLVILLFVLSWAPYSIVAL). The Extracellular segment spans residues 313 to 327 (MAFAGYAHVLTPYMN). A helical membrane pass occupies residues 328–348 (SVPAVIAKASAIHNPIIYAIT). Residue K335 is modified to N6-(retinylidene)lysine. The Cytoplasmic segment spans residues 349–487 (HPKYRMAIAQ…LPLHPGWAFH (139 aa)). Residues 436-459 (CSQGLEDREAKAPVRPQGREAETP) are disordered. Residues 440-457 (LEDREAKAPVRPQGREAE) are compositionally biased toward basic and acidic residues.

The protein belongs to the G-protein coupled receptor 1 family. Opsin subfamily. As to expression, eye. Expression is restricted within the ganglion cell layer.

The protein resides in the cell membrane. The protein localises to the cell projection. It localises to the axon. Its subcellular location is the dendrite. It is found in the perikaryon. In terms of biological role, photoreceptor that binds cis-retinaldehydes. Contributes to pupillar reflex, photoentrainment and other non-image forming responses to light. May be involved in the optokinetic visual tracking response. May be involved in the regulation of retinal hyaloid vessel growth and regression. The sequence is that of Melanopsin (OPN4) from Felis catus (Cat).